Here is a 65-residue protein sequence, read N- to C-terminus: MYKLKTRKAAAKRYKAVGNKKISRRKAFRSHLLQKKSTNRKRQLSQVVIASPGDTKKIYLMLPYL.

Belongs to the bacterial ribosomal protein bL35 family.

The protein localises to the plastid. It localises to the cyanelle. In Cyanophora paradoxa, this protein is Large ribosomal subunit protein bL35c (rpl35).